A 210-amino-acid polypeptide reads, in one-letter code: uncharacterized protein (210 aa).

To E.coli YkgK.

This is an uncharacterized protein from Escherichia coli (strain K12).